The primary structure comprises 173 residues: Acireductone dioxygenase 1 (173 aa).

Residues His96, His98, Glu102, and His140 each contribute to the Fe(2+) site. Ni(2+) contacts are provided by His96, His98, Glu102, and His140.

Belongs to the acireductone dioxygenase (ARD) family. As to quaternary structure, monomer. The cofactor is Fe(2+). Requires Ni(2+) as cofactor.

It catalyses the reaction 1,2-dihydroxy-5-(methylsulfanyl)pent-1-en-3-one + O2 = 3-(methylsulfanyl)propanoate + CO + formate + 2 H(+). It carries out the reaction 1,2-dihydroxy-5-(methylsulfanyl)pent-1-en-3-one + O2 = 4-methylsulfanyl-2-oxobutanoate + formate + 2 H(+). Its pathway is amino-acid biosynthesis; L-methionine biosynthesis via salvage pathway; L-methionine from S-methyl-5-thio-alpha-D-ribose 1-phosphate: step 5/6. In terms of biological role, catalyzes 2 different reactions between oxygen and the acireductone 1,2-dihydroxy-3-keto-5-methylthiopentene (DHK-MTPene) depending upon the metal bound in the active site. Fe-containing acireductone dioxygenase (Fe-ARD) produces formate and 2-keto-4-methylthiobutyrate (KMTB), the alpha-ketoacid precursor of methionine in the methionine recycle pathway. Ni-containing acireductone dioxygenase (Ni-ARD) produces methylthiopropionate, carbon monoxide and formate, and does not lie on the methionine recycle pathway. In Pectobacterium atrosepticum (strain SCRI 1043 / ATCC BAA-672) (Erwinia carotovora subsp. atroseptica), this protein is Acireductone dioxygenase 1.